The primary structure comprises 249 residues: DNA repair protein RecO (249 aa).

Belongs to the RecO family.

Functionally, involved in DNA repair and RecF pathway recombination. The chain is DNA repair protein RecO from Rhodopseudomonas palustris (strain HaA2).